Reading from the N-terminus, the 381-residue chain is DNA double-strand break repair protein Mre11 (381 aa).

Residues Asp9, His11, Asp50, and Asp85 each contribute to the Mn(2+) site. The active-site Proton donor is the His86. Mn(2+)-binding residues include His156, His187, and His189.

The protein belongs to the MRE11/RAD32 family. Homodimer. Forms a heterotetramer composed of two Mre11 subunits and two Rad50 subunits. Mn(2+) is required as a cofactor.

Its activity is regulated as follows. Nuclease activity is regulated by Rad50. Functionally, part of the Rad50/Mre11 complex, which is involved in the early steps of DNA double-strand break (DSB) repair. The complex may facilitate opening of the processed DNA ends to aid in the recruitment of HerA and NurA. Mre11 binds to DSB ends and has both double-stranded 3'-5' exonuclease activity and single-stranded endonuclease activity. This chain is DNA double-strand break repair protein Mre11, found in Saccharolobus solfataricus (strain ATCC 35092 / DSM 1617 / JCM 11322 / P2) (Sulfolobus solfataricus).